A 208-amino-acid chain; its full sequence is Large ribosomal subunit protein uL3 (208 aa).

Positions 123-147 (RHGQSRGPMAHGSRYHRRPGSMGPV) are disordered.

Belongs to the universal ribosomal protein uL3 family. As to quaternary structure, part of the 50S ribosomal subunit. Forms a cluster with proteins L14 and L19.

Functionally, one of the primary rRNA binding proteins, it binds directly near the 3'-end of the 23S rRNA, where it nucleates assembly of the 50S subunit. This chain is Large ribosomal subunit protein uL3, found in Streptococcus sanguinis (strain SK36).